Consider the following 52-residue polypeptide: uncharacterized protein (52 aa).

Residues 7–27 (MFQLFVFIIFAAVVFAAVTGF) traverse the membrane as a helical segment.

It localises to the membrane. This is an uncharacterized protein from Bacillus subtilis (strain 168).